We begin with the raw amino-acid sequence, 267 residues long: Translation initiation factor 2 subunit alpha (267 aa).

Residues 12–83 (GEYVIATVKE…RRKTVDVSLK (72 aa)) enclose the S1 motif domain.

Belongs to the eIF-2-alpha family. Heterotrimer composed of an alpha, a beta and a gamma chain.

EIF-2 functions in the early steps of protein synthesis by forming a ternary complex with GTP and initiator tRNA. In Staphylothermus marinus (strain ATCC 43588 / DSM 3639 / JCM 9404 / F1), this protein is Translation initiation factor 2 subunit alpha.